We begin with the raw amino-acid sequence, 303 residues long: N-acetyl-D-glucosamine kinase (303 aa).

Residues Gly-4–Lys-11 and Gly-133–Leu-140 each bind ATP. His-157, Cys-177, Cys-179, and Cys-184 together coordinate Zn(2+).

Belongs to the ROK (NagC/XylR) family. NagK subfamily.

The enzyme catalyses N-acetyl-D-glucosamine + ATP = N-acetyl-D-glucosamine 6-phosphate + ADP + H(+). It participates in cell wall biogenesis; peptidoglycan recycling. Catalyzes the phosphorylation of N-acetyl-D-glucosamine (GlcNAc) derived from cell-wall degradation, yielding GlcNAc-6-P. The polypeptide is N-acetyl-D-glucosamine kinase (Salmonella paratyphi B (strain ATCC BAA-1250 / SPB7)).